Here is a 355-residue protein sequence, read N- to C-terminus: DNA polymerase IV (355 aa).

The UmuC domain occupies 4-185 (IIHVDMDCFY…LPLKKIPGVG (182 aa)). Mg(2+) contacts are provided by Asp-8 and Asp-103. The active site involves Glu-104.

It belongs to the DNA polymerase type-Y family. Monomer. Requires Mg(2+) as cofactor.

Its subcellular location is the cytoplasm. The catalysed reaction is DNA(n) + a 2'-deoxyribonucleoside 5'-triphosphate = DNA(n+1) + diphosphate. Its function is as follows. Poorly processive, error-prone DNA polymerase involved in untargeted mutagenesis. Copies undamaged DNA at stalled replication forks, which arise in vivo from mismatched or misaligned primer ends. These misaligned primers can be extended by PolIV. Exhibits no 3'-5' exonuclease (proofreading) activity. May be involved in translesional synthesis, in conjunction with the beta clamp from PolIII. The sequence is that of DNA polymerase IV from Pasteurella multocida (strain Pm70).